The sequence spans 269 residues: Ribosomal RNA large subunit methyltransferase E (269 aa).

Residues Gly58, Trp60, Asp78, Asp96, and Asp120 each contribute to the S-adenosyl-L-methionine site. Lys160 serves as the catalytic Proton acceptor. Positions 234 to 269 are disordered; that stretch reads HEKKEGNETSDNDEDNNKNGLMIKKIKELRGKRSKL. The segment covering 258 to 269 has biased composition (basic and acidic residues); the sequence is KIKELRGKRSKL.

It belongs to the class I-like SAM-binding methyltransferase superfamily. RNA methyltransferase RlmE family.

The protein localises to the cytoplasm. It carries out the reaction uridine(2552) in 23S rRNA + S-adenosyl-L-methionine = 2'-O-methyluridine(2552) in 23S rRNA + S-adenosyl-L-homocysteine + H(+). Its function is as follows. Specifically methylates the uridine in position 2552 of 23S rRNA at the 2'-O position of the ribose in the fully assembled 50S ribosomal subunit. The chain is Ribosomal RNA large subunit methyltransferase E from Methanococcus aeolicus (strain ATCC BAA-1280 / DSM 17508 / OCM 812 / Nankai-3).